The following is a 61-amino-acid chain: KEGYLMDHEGCKLSCFIRPAGYCGRECAIKKGSEGYCAWPACYCYKLPNHVKVWEYATNRC.

Positions 1 to 61 (KEGYLMDHEG…KVWEYATNRC (61 aa)) constitute an LCN-type CS-alpha/beta domain. 4 disulfides stabilise this stretch: cysteine 11/cysteine 61, cysteine 15/cysteine 37, cysteine 23/cysteine 42, and cysteine 27/cysteine 44. The residue at position 61 (cysteine 61) is a Cysteine amide.

Belongs to the long (4 C-C) scorpion toxin superfamily. Sodium channel inhibitor family. Beta subfamily. Expressed by the venom gland.

The protein resides in the secreted. Its function is as follows. Beta toxins bind voltage-independently at site-4 of sodium channels (Nav) and shift the voltage of activation toward more negative potentials thereby affecting sodium channel activation and promoting spontaneous and repetitive firing. This is Beta-toxin Tce4 from Tityus cerroazul (Scorpion).